The following is a 397-amino-acid chain: Subtilisin-like protease 12 (397 aa).

An N-terminal signal peptide occupies residues 1–19 (MSIFKLMVIYFTLFWVVNA). The propeptide occupies 20–116 (AQLLDLDSHG…VEPNREMKAA (97 aa)). One can recognise an Inhibitor I9 domain in the interval 35 to 115 (YIVVMKNGVS…FVEPNREMKA (81 aa)). Asn123, Asn136, and Asn150 each carry an N-linked (GlcNAc...) asparagine glycan. Residues 125–397 (TWGLARISHM…DKLLYNGSGA (273 aa)) enclose the Peptidase S8 domain. Active-site charge relay system residues include Asp157 and His188. Asn249, Asn305, and Asn334 each carry an N-linked (GlcNAc...) asparagine glycan. Ser343 (charge relay system) is an active-site residue. Asn385 and Asn393 each carry an N-linked (GlcNAc...) asparagine glycan.

The protein belongs to the peptidase S8 family.

Its subcellular location is the secreted. Its function is as follows. Secreted subtilisin-like serine protease with keratinolytic activity that contributes to pathogenicity. The polypeptide is Subtilisin-like protease 12 (SUB12) (Arthroderma gypseum (strain ATCC MYA-4604 / CBS 118893) (Microsporum gypseum)).